The sequence spans 238 residues: Cysteine-rich venom protein pseudechetoxin (238 aa).

Positions 1–19 are cleaved as a signal peptide; sequence MIAFIVLLSLAAVLQQSSG. Positions 20 to 27 are excised as a propeptide; sequence TADFASES. Positions 38–164 constitute an SCP domain; that stretch reads VDKHNALRRS…SSKYLYVCQY (127 aa). 2 residues coordinate Zn(2+): threonine 51 and serine 106. 8 disulfide bridges follow: cysteine 75/cysteine 153, cysteine 92/cysteine 165, cysteine 148/cysteine 162, cysteine 184/cysteine 191, cysteine 187/cysteine 196, cysteine 200/cysteine 233, cysteine 209/cysteine 227, and cysteine 218/cysteine 231. Residues 200–233 form the ShKT domain; the sequence is CKRNNDFSNCKSLAKKSKCQTEWIKKKCPASCFC.

As to expression, expressed by the venom gland.

The protein resides in the secreted. Functionally, blocks olfactory (CNGA2) and retinal (CNGA1) cyclic nucleotide-gated (CNG) ion channel currents. Does not inhibit retinal (CNGA3) currents. It forms high-affinity contacts with the pore turret region and most likely inhibits CNG channel current by blocking the external entrance to the transmembrane pore. Is really more potent that Pseudecin. Does not affect neither depolarization- nor caffeine-induced contraction arterial smooth muscle. The chain is Cysteine-rich venom protein pseudechetoxin from Pseudechis australis (Mulga snake).